The primary structure comprises 298 residues: Proline iminopeptidase (298 aa).

In terms of domain architecture, AB hydrolase-1 spans Val26–Asp277. Catalysis depends on Ser103, which acts as the Nucleophile. Asp244 is a catalytic residue. The active-site Proton donor is the His271.

The protein belongs to the peptidase S33 family. Monomer.

The catalysed reaction is Release of N-terminal proline from a peptide.. Releases the N-terminal proline from various substrates. Cleaves specifically Pro-betaNA and small peptides containing proline at the amino terminal. No activity against hydroxyproline-betaNA. This chain is Proline iminopeptidase (fpaP), found in Elizabethkingia meningoseptica (Chryseobacterium meningosepticum).